The primary structure comprises 484 residues: Glutamate--tRNA ligase (484 aa).

The 'HIGH' region motif lies at 11–21 (PSPTGLLHIGN). The short motif at 255–259 (KLSKR) is the 'KMSKS' region element. Lys-258 lines the ATP pocket.

It belongs to the class-I aminoacyl-tRNA synthetase family. Glutamate--tRNA ligase type 1 subfamily. In terms of assembly, monomer.

The protein localises to the cytoplasm. It carries out the reaction tRNA(Glu) + L-glutamate + ATP = L-glutamyl-tRNA(Glu) + AMP + diphosphate. Its function is as follows. Catalyzes the attachment of glutamate to tRNA(Glu) in a two-step reaction: glutamate is first activated by ATP to form Glu-AMP and then transferred to the acceptor end of tRNA(Glu). The sequence is that of Glutamate--tRNA ligase from Streptococcus agalactiae serotype III (strain NEM316).